Reading from the N-terminus, the 350-residue chain is MLYNIARPLLFSLDPETAHELSLAALHFFGRVLPAATPTESDPVDVMGLHFPNRIGLAAGLDKNGEAIDGLARLGFGFLEIGTITPRPQPGNPRPRMFRLPEVRAIINRMGFNNHGVDALVANVRAAKYRGILGINIGKNFDTPIDRAADDYLACLDKVYALASYVTVNISSPNTKNLRQLQGESELDDLLGRLKARQQQLADRHGRYVPLTLKIAPDLEPAQVTNIADALRRHRIDGVIATNTTIARDKVQGVRYAEQQGGLSGAPVFEASTAVVAQLSRALAGELPIIAAGGILDGRGARAKLAAGASLVQVYSGLIYRGPSLIAECVRATTDFADSGHAATSASFGA.

FMN-binding positions include 59–63 and Thr83; that span reads AGLDK. Lys63 contacts substrate. Residue 108–112 coordinates substrate; sequence NRMGF. FMN is bound by residues Asn136 and Asn169. Position 169 (Asn169) interacts with substrate. Ser172 serves as the catalytic Nucleophile. Asn174 serves as a coordination point for substrate. FMN contacts are provided by Lys214 and Thr242. 243 to 244 is a substrate binding site; the sequence is NT. Residues Gly265, Gly294, and 315–316 contribute to the FMN site; that span reads YS.

It belongs to the dihydroorotate dehydrogenase family. Type 2 subfamily. In terms of assembly, monomer. FMN serves as cofactor.

Its subcellular location is the cell membrane. The catalysed reaction is (S)-dihydroorotate + a quinone = orotate + a quinol. Its pathway is pyrimidine metabolism; UMP biosynthesis via de novo pathway; orotate from (S)-dihydroorotate (quinone route): step 1/1. Its function is as follows. Catalyzes the conversion of dihydroorotate to orotate with quinone as electron acceptor. This chain is Dihydroorotate dehydrogenase (quinone), found in Aromatoleum aromaticum (strain DSM 19018 / LMG 30748 / EbN1) (Azoarcus sp. (strain EbN1)).